The primary structure comprises 256 residues: Ribonuclease HII (256 aa).

The RNase H type-2 domain maps to 72-256; the sequence is QYVAGIDEVG…TFRPVPDYVN (185 aa). 3 residues coordinate a divalent metal cation: D78, E79, and D170.

The protein belongs to the RNase HII family. It depends on Mn(2+) as a cofactor. Requires Mg(2+) as cofactor.

The protein resides in the cytoplasm. It carries out the reaction Endonucleolytic cleavage to 5'-phosphomonoester.. In terms of biological role, endonuclease that specifically degrades the RNA of RNA-DNA hybrids. This chain is Ribonuclease HII, found in Limosilactobacillus fermentum (strain NBRC 3956 / LMG 18251) (Lactobacillus fermentum).